The following is a 350-amino-acid chain: m7GpppX diphosphatase (350 aa).

Ser-2 is subject to N-acetylserine. A Phosphoserine modification is found at Ser-60. Thr-66 is modified (phosphothreonine). Thr-66 bears the Phosphothreonine; by YAK1 mark. Tyr-70 bears the Phosphotyrosine mark. At Thr-120 the chain carries Phosphothreonine. Substrate contacts are provided by residues Glu-171, Lys-196, and His-259–His-270. The short motif at His-266–His-270 is the Histidine triad motif element. The active-site Nucleophile is His-268.

It belongs to the HIT family. Homodimer. Forms heterodimer with DCS2; the interaction inhibits the DCS1 scavenger decapping activity during post-diauxic growth. Post-translationally, phosphorylated. Phosphorylation occurs upon glucose deprivation.

It is found in the cytoplasm. It localises to the perinuclear region. Its subcellular location is the P-body. The enzyme catalyses a 5'-end (N(7)-methyl 5'-triphosphoguanosine)-ribonucleoside in mRNA + H2O = N(7)-methyl-GMP + a 5'-end diphospho-ribonucleoside in mRNA + 2 H(+). Its activity is regulated as follows. The hydrolytic product 7-methylguanosine diphosphate (m7GDP) efficiently inhibits the decapping scavenger activity and acts as a competitive inhibitor in vitro. Functionally, decapping scavenger enzyme that catalyzes the cleavage of a residual cap structure following the degradation of mRNAs by the 3'-&gt;5' exosome-mediated mRNA decay pathway. Hydrolyzes cap analog structures like 7-methylguanosine nucleoside triphosphate (m7GpppG) and tri-methyl guanosine nucleoside triphosphate (m3(2,2,7)GpppG) with up to 10 nucleotide substrates (small capped oligoribonucleotides) and specifically releases 5'-phosphorylated RNA fragments and 7-methylguanosine monophosphate (m7GMP) or tri-methyl guanosine nucleoside monophosphate (m3(2,2,7)GMP), respectively. Does not hydrolyze unmethylated cap analog (GpppG) and shows no decapping activity on intact m7GpppG-capped mRNA molecules longer than 25 nucleotides. Does not hydrolyze 7-methylguanosine diphosphate (m7GDP) and tri-methylguanosine diphosphate (m3(2,2,7)GDP) to (m(7)GMP) and m3(2,2,7)GMP, respectively. May also play a role in the 5'-&gt;3 mRNA decay pathway; m7GDP, the downstream product released by the 5'-&gt;3' mRNA mediated decapping activity, may be also converted by DCS1 to m7GMP. Binds to m7GpppG and strongly to m7GDP. May also regulate the 5'-&gt;3' exoribonucleolytic mRNA decay pathway in a cap-independent manner. Negatively regulates trehalase activity. The chain is m7GpppX diphosphatase from Saccharomyces cerevisiae (strain ATCC 204508 / S288c) (Baker's yeast).